Here is a 371-residue protein sequence, read N- to C-terminus: uncharacterized protein (371 aa).

ATP is bound at residue 33 to 40; it reads GPLNSGKT.

It belongs to the archaeal ATPase family.

This is an uncharacterized protein from Methanocaldococcus jannaschii (strain ATCC 43067 / DSM 2661 / JAL-1 / JCM 10045 / NBRC 100440) (Methanococcus jannaschii).